The sequence spans 92 residues: Small ribosomal subunit protein uS19 (92 aa).

This sequence belongs to the universal ribosomal protein uS19 family.

Functionally, protein S19 forms a complex with S13 that binds strongly to the 16S ribosomal RNA. This Paracoccus denitrificans (strain Pd 1222) protein is Small ribosomal subunit protein uS19.